Consider the following 262-residue polypeptide: Cutinase 2 (262 aa).

Position 61 (Y61) interacts with poly(ethylene terephthalate). S131 acts as the Nucleophile in catalysis. Poly(ethylene terephthalate)-binding residues include M132 and W156. Active-site charge relay system residues include D177 and H209. A disulfide bond links C242 and C260.

This sequence belongs to the AB hydrolase superfamily.

The protein localises to the secreted. Its subcellular location is the periplasm. The enzyme catalyses a butanoate ester + H2O = an aliphatic alcohol + butanoate + H(+). It carries out the reaction an acetyl ester + H2O = an aliphatic alcohol + acetate + H(+). The catalysed reaction is (ethylene terephthalate)(n) + H2O = (ethylene terephthalate)(n-1) + 4-[(2-hydroxyethoxy)carbonyl]benzoate + H(+). It catalyses the reaction cutin + H2O = cutin monomers.. In terms of biological role, catalyzes the hydrolysis of cutin, a polyester that forms the structure of plant cuticle. Shows esterase activity towards p-nitrophenol-linked aliphatic esters (pNP-aliphatic esters). Capable of degrading the plastic poly(ethylene terephthalate) (PET), the most abundant polyester plastic in the world. Capable of degrading the bioplastic poly(lactic acid) (PLLA). The sequence is that of Cutinase 2 from Thermobifida cellulosilytica.